The chain runs to 439 residues: Serine--tRNA ligase (439 aa).

247–249 lines the L-serine pocket; that stretch reads TSE. Position 278–280 (278–280) interacts with ATP; it reads RSE. Glu-301 contacts L-serine. Residue 365-368 coordinates ATP; sequence EISS. Ser-400 lines the L-serine pocket.

It belongs to the class-II aminoacyl-tRNA synthetase family. Type-1 seryl-tRNA synthetase subfamily. In terms of assembly, homodimer. The tRNA molecule binds across the dimer.

The protein localises to the cytoplasm. It carries out the reaction tRNA(Ser) + L-serine + ATP = L-seryl-tRNA(Ser) + AMP + diphosphate + H(+). It catalyses the reaction tRNA(Sec) + L-serine + ATP = L-seryl-tRNA(Sec) + AMP + diphosphate + H(+). It functions in the pathway aminoacyl-tRNA biosynthesis; selenocysteinyl-tRNA(Sec) biosynthesis; L-seryl-tRNA(Sec) from L-serine and tRNA(Sec): step 1/1. Functionally, catalyzes the attachment of serine to tRNA(Ser). Is also able to aminoacylate tRNA(Sec) with serine, to form the misacylated tRNA L-seryl-tRNA(Sec), which will be further converted into selenocysteinyl-tRNA(Sec). The polypeptide is Serine--tRNA ligase (Paracidovorax citrulli (strain AAC00-1) (Acidovorax citrulli)).